A 582-amino-acid chain; its full sequence is TRAF-type zinc finger domain-containing protein 1 (582 aa).

Residue A2 is modified to N-acetylalanine. The TRAF-type zinc finger occupies 27 to 103; that stretch reads IHEIHCQRNI…DLELSILKLK (77 aa). S191 carries the phosphoserine modification. A disordered region spans residues 216-238; it reads EEQERQERNRGQQPPKEGGEDGA. Phosphoserine occurs at positions 278, 320, 326, 327, 409, 415, 430, and 470. Disordered stretches follow at residues 402-509 and 522-582; these read EGIP…IAPG and PENI…EEEE. Composition is skewed to polar residues over residues 454-471 and 486-504; these read PFNNMTATYNQLSRSTSG and LNNSDSQDIQGRNQNSQNG.

As to quaternary structure, interacts with MAVS, TICAM1, TRAF1, TRAF2, TRAF3 and TRAF6.

In terms of biological role, negative feedback regulator that controls excessive innate immune responses. Regulates both Toll-like receptor 4 (TLR4) and DDX58/RIG1-like helicases (RLH) pathways. May inhibit the LTR pathway by direct interaction with TRAF6 and attenuation of NF-kappa-B activation. May negatively regulate the RLH pathway downstream from MAVS and upstream of NF-kappa-B and IRF3. The polypeptide is TRAF-type zinc finger domain-containing protein 1 (TRAFD1) (Macaca fascicularis (Crab-eating macaque)).